We begin with the raw amino-acid sequence, 445 residues long: Argininosuccinate synthase (445 aa).

Residues 17-25 (AFSGGLDTS) and alanine 43 contribute to the ATP site. An L-citrulline-binding site is contributed by tyrosine 99. 2 residues coordinate ATP: glycine 129 and threonine 131. 3 residues coordinate L-aspartate: threonine 131, asparagine 135, and aspartate 136. Asparagine 135 serves as a coordination point for L-citrulline. Aspartate 136 contacts ATP. Positions 139 and 192 each coordinate L-citrulline. Aspartate 194 lines the ATP pocket. Residues threonine 201, glutamate 203, and glutamate 280 each coordinate L-citrulline.

This sequence belongs to the argininosuccinate synthase family. Type 2 subfamily. Homotetramer.

Its subcellular location is the cytoplasm. It catalyses the reaction L-citrulline + L-aspartate + ATP = 2-(N(omega)-L-arginino)succinate + AMP + diphosphate + H(+). It functions in the pathway amino-acid biosynthesis; L-arginine biosynthesis; L-arginine from L-ornithine and carbamoyl phosphate: step 2/3. This chain is Argininosuccinate synthase, found in Bradyrhizobium sp. (strain BTAi1 / ATCC BAA-1182).